Reading from the N-terminus, the 695-residue chain is NADPH--cytochrome P450 reductase (695 aa).

The Lumenal segment spans residues 1–8; it reads MAQLDTLD. The helical transmembrane segment at 9-31 threads the bilayer; that stretch reads LVVLVVLLVGSAAYFTKGTYWAV. Topologically, residues 32-695 are cytoplasmic; the sequence is PKDPYAASGP…SGSYQEDVWS (664 aa). In terms of domain architecture, Flavodoxin-like spans 66 to 221; that stretch reads CVIFYGSQTG…DFLAWKEPMW (156 aa). FMN-binding positions include 72 to 77, 123 to 126, 169 to 178, and Asp204; these read SQTGTA, ATYG, and LGNNTYEHYQ. Residues 277-538 enclose the FAD-binding FR-type domain; that stretch reads HNPFIAPIVE…HVRHSNFKLP (262 aa). Arg296 lines the NADP(+) pocket. FAD is bound by residues 451–454, 469–471, and 486–489; these read RYYS, TAV, and GVTT. NADP(+) contacts are provided by residues Thr552, 614–615, 620–624, and Glu656; these read SR and KVYVQ. Trp694 contributes to the FAD binding site.

Belongs to the NADPH--cytochrome P450 reductase family. This sequence in the N-terminal section; belongs to the flavodoxin family. The protein in the C-terminal section; belongs to the flavoprotein pyridine nucleotide cytochrome reductase family. FAD serves as cofactor. It depends on FMN as a cofactor.

The protein resides in the endoplasmic reticulum membrane. It is found in the mitochondrion outer membrane. Its subcellular location is the cell membrane. It catalyses the reaction 2 oxidized [cytochrome P450] + NADPH = 2 reduced [cytochrome P450] + NADP(+) + H(+). This enzyme is required for electron transfer from NADP to cytochrome P450 in microsomes. It can also provide electron transfer to heme oxygenase and cytochrome B5. Involved in ergosterol biosynthesis. The protein is NADPH--cytochrome P450 reductase of Aspergillus terreus (strain NIH 2624 / FGSC A1156).